Here is a 78-residue protein sequence, read N- to C-terminus: Acyl carrier protein (78 aa).

In terms of domain architecture, Carrier spans 2 to 77 (SNIEDRVRKI…AAIDYVNSAS (76 aa)). Residue Ser37 is modified to O-(pantetheine 4'-phosphoryl)serine.

This sequence belongs to the acyl carrier protein (ACP) family. 4'-phosphopantetheine is transferred from CoA to a specific serine of apo-ACP by AcpS. This modification is essential for activity because fatty acids are bound in thioester linkage to the sulfhydryl of the prosthetic group.

The protein resides in the cytoplasm. It functions in the pathway lipid metabolism; fatty acid biosynthesis. Functionally, carrier of the growing fatty acid chain in fatty acid biosynthesis. The protein is Acyl carrier protein of Photobacterium profundum (strain SS9).